The sequence spans 202 residues: Protein FAR-RED ELONGATED HYPOCOTYL 1 (202 aa).

Residue Ser39 is modified to Phosphoserine. Positions 40-43 match the Nuclear localization sequence (NLS) motif; that stretch reads KKRK. The Nuclear export sequence (NES) motif lies at 54-57; the sequence is LLPL. A Phosphothreonine modification is found at Thr61.

The protein belongs to the FHY1 protein family. In terms of assembly, homodimer and heterodimer with FHL. Interacts with underphosphorylated PHYA, especially upon far-red (FR) light illumination. Binds to LAF1 and HFR1. Forms PHYA/FHY1/HFR1 complex in darkness but dissociates from PHYA and HFR1 in response to continuous FR light (FRc). In terms of processing, inactivated by rapid reversible PHYA-mediated phosphorylation at Ser-39 and Thr-61 in red light (R), thus inhibiting PHYA signaling in a negative feedback loop; this ensures the seedling deetiolation process in response to a R-enriched light condition. Subsequent exposure to far-red light (FR) after the R conditions leads to dephosphorylation. The phosphorylated form is cytoplasmic only and unable to bind to chromatin at direct target genes whereas the unphosphorylated form can shuttle from cytoplasm to nucleus. As to expression, expressed in hypocotyl cells of etiolated plants.

The protein resides in the nucleus. It is found in the cytoplasm. Key regulator of far red / red (FR/R) spectrum-specific responses essential for the adaption to changing light conditions (e.g. de-etiolation), essentially by regulating PHYA shuttling from the cytoplasm to the nucleus and by directly regulating the expression of some target genes, depending on light conditions and phosphorylation status. Binds chromatin at target genes promoters, especially in FR light conditions. Can activate transcription of different genes, some being in a phytochrome A (PHYA)-dependent and other in a PHYA-independent manners. Controls specific aspects of plant development, such as the inhibition of seed germination under FR during salt stress. Essential for light-regulated PHYA nuclear accumulation and subsequent PHYA phototropic signaling processes involved in photomorphogenesis. Mediates the association of PHYA with HFR1 and LAF1 in the nucleus in response to FR conditions. PHYA-specific signal transducer in response to continuous FR lights. Contributes to inhibition of hypocotyl elongation in continuous blue light (B). In Arabidopsis thaliana (Mouse-ear cress), this protein is Protein FAR-RED ELONGATED HYPOCOTYL 1.